The following is a 292-amino-acid chain: Techylectin-5A (292 aa).

A signal peptide spans 1-23 (MHNLRNILFVITLIGQKYGLTSS). Q24 carries the post-translational modification Pyrrolidone carboxylic acid. The Fibrinogen C-terminal domain maps to 63 to 286 (PIVSPDPTDC…QVEMKIRPVE (224 aa)). Cysteines 72 and 103 form a disulfide. N173, N198, and N214 each carry an N-linked (GlcNAc...) asparagine glycan. Ca(2+)-binding residues include D221, H225, and T227. A disulfide bond links C229 and C242.

Multimeric. PubMed:10468566 and PubMed:11707569 are in disagreement about the nature of the multimer, PubMed:10468566 finds hexamers and octamers, the results in PubMed:11707569 suggest tetramers. As to expression, strongly expressed in heart and intestine, weakly expressed in hepatopancreas. Not found in hemocytes, stomach, nervous tissue or skeletal muscle.

The protein localises to the secreted. In terms of biological role, lectin involved in innate immunity. Agglutinates all types of human erythrocytes, Gram-positive and Gram-negative bacteria. Has a stronger agglutinating activity towards Gram-negative bacteria than towards Gram-positive bacteria. Specifically recognizes acetyl group-containing substances on agglutinated cells. The hemagglutinating activity was inhibited by EDTA, acetyl group-containing mono- and disaccharides, N-acetyl derivatives of amino acids, other acetyl group-containing substances, propionamide and benzamide. Enhances the antimicrobial activity of big defensin against Gram-positive bacteria but not against Gram-negative bacteria. The sequence is that of Techylectin-5A from Tachypleus tridentatus (Japanese horseshoe crab).